We begin with the raw amino-acid sequence, 191 residues long: Elongation factor P-like protein (191 aa).

Belongs to the elongation factor P family.

In Photobacterium profundum (strain SS9), this protein is Elongation factor P-like protein.